The sequence spans 117 residues: Antimicrobial peptide AmAMP1 (117 aa).

Positions M1–A25 are cleaved as a signal peptide. A propeptide spanning residues A26–R73 is cleaved from the precursor. Intrachain disulfides connect C76/C115, C85/C108, and C94/C112.

It belongs to the coral AMP family.

Its subcellular location is the secreted. Functionally, coral peptide that probably acts as an antimicrobial peptide in the surface mucous layer of planula larvae and likely also in adults. Shows moderate to high activity against some Gram-negative and Gram-positive bacteria (tested on E.coli, B.megaterium, S.aureus, E.aesturaii, B.algicola, Acinetobacter spec.). Does not show antibacterial activity against the coral pathogen V.coralliilyticus. This chain is Antimicrobial peptide AmAMP1, found in Acropora millepora (Staghorn coral).